A 616-amino-acid polypeptide reads, in one-letter code: MIVVQTLFIHIYQIQFVITRRYRIVNQTILNRVKTRVMHQLVSSLIYENIVVYKASYQDGVGHFTIEGHDSEYRFTAEKTHSFDRIRITSPIERVVGDEADTTTDYTQLLREVVFTFPKNDEKLEQFIVELLQTELKDTQSMQYRESNPPATPETFNDYEFYAMEGHQYHPSYKSRLGFTLSDNLKFGPDFVPNVKLQWLAIDKDKVETTVSRNVVVNEMLRQQVGDKTYEHFVQQIEASGKHVNDVEMIPVHPWQFEHVIQVDLAEERLNGTVLWLGESDELYHPQQSIRTMSPIDTTKYYLKVPISITNTSTKRVLAPHTIENAAQITDWLKQIQQQDMYLKDELKTVFLGEVLGQSYLNTQLSPYKQTQVYGALGVIWRENIYHMLIDEEDAIPFNALYASDKDGVPFIENWIKQYGSEAWTKQFLAVAIRPMIHMLYYHGIAFESHAQNMMLIHENGWPTRIALKDFHDGVRFKREHLSEAASHLTLKPMPEAHKKVNSNSFIETDDERLVRDFLHDAFFFINIAEIILFIEKQYGIDEELQWQWVKGIIEAYQEAFPELNNYQHFDLFEPTIQVEKLTTRRLLSDSELRIHHVTNPLGVGGINDATTISET.

This sequence belongs to the IucA/IucC family. Forms a mixture of monomer and dimer in solution.

It catalyses the reaction 2-[(2-aminoethylcarbamoyl)methyl]-2-hydroxybutanedioate + (S)-2,3-diaminopropanoate + ATP = 2-[(L-alanin-3-ylcarbamoyl)methyl]-3-(2-aminoethylcarbamoyl)-2-hydroxypropanoate + AMP + diphosphate. It functions in the pathway siderophore biosynthesis. Its function is as follows. Catalyzes the condensation of L-2,3-diaminopropionic acid (L-Dap) and citryl-diaminoethane to form L-2,3-diaminopropionyl-citryl-diaminoethane, the third step in staphyloferrin B biosynthesis. In Staphylococcus aureus (strain NCTC 8325 / PS 47), this protein is 2-[(L-alanin-3-ylcarbamoyl)methyl]-3-(2-aminoethylcarbamoyl)-2-hydroxypropanoate synthase.